Consider the following 76-residue polypeptide: Small ribosomal subunit protein bS16 (76 aa).

It belongs to the bacterial ribosomal protein bS16 family.

This Helicobacter acinonychis (strain Sheeba) protein is Small ribosomal subunit protein bS16.